A 171-amino-acid polypeptide reads, in one-letter code: Adenine phosphoribosyltransferase (171 aa).

It belongs to the purine/pyrimidine phosphoribosyltransferase family. Homodimer.

It localises to the cytoplasm. The enzyme catalyses AMP + diphosphate = 5-phospho-alpha-D-ribose 1-diphosphate + adenine. It participates in purine metabolism; AMP biosynthesis via salvage pathway; AMP from adenine: step 1/1. Functionally, catalyzes a salvage reaction resulting in the formation of AMP, that is energically less costly than de novo synthesis. The sequence is that of Adenine phosphoribosyltransferase from Geobacter metallireducens (strain ATCC 53774 / DSM 7210 / GS-15).